A 412-amino-acid chain; its full sequence is Serine hydroxymethyltransferase (412 aa).

Residues L117 and 121–123 (GHL) each bind (6S)-5,6,7,8-tetrahydrofolate. The residue at position 226 (K226) is an N6-(pyridoxal phosphate)lysine.

This sequence belongs to the SHMT family. Homodimer. Requires pyridoxal 5'-phosphate as cofactor.

Its subcellular location is the cytoplasm. The enzyme catalyses (6R)-5,10-methylene-5,6,7,8-tetrahydrofolate + glycine + H2O = (6S)-5,6,7,8-tetrahydrofolate + L-serine. It functions in the pathway one-carbon metabolism; tetrahydrofolate interconversion. The protein operates within amino-acid biosynthesis; glycine biosynthesis; glycine from L-serine: step 1/1. In terms of biological role, catalyzes the reversible interconversion of serine and glycine with tetrahydrofolate (THF) serving as the one-carbon carrier. This reaction serves as the major source of one-carbon groups required for the biosynthesis of purines, thymidylate, methionine, and other important biomolecules. Also exhibits THF-independent aldolase activity toward beta-hydroxyamino acids, producing glycine and aldehydes, via a retro-aldol mechanism. The sequence is that of Serine hydroxymethyltransferase from Staphylococcus epidermidis (strain ATCC 35984 / DSM 28319 / BCRC 17069 / CCUG 31568 / BM 3577 / RP62A).